Reading from the N-terminus, the 101-residue chain is Small ribosomal subunit protein uS14 (101 aa).

This sequence belongs to the universal ribosomal protein uS14 family. Part of the 30S ribosomal subunit. Contacts proteins S3 and S10.

Binds 16S rRNA, required for the assembly of 30S particles and may also be responsible for determining the conformation of the 16S rRNA at the A site. The sequence is that of Small ribosomal subunit protein uS14 from Escherichia coli O139:H28 (strain E24377A / ETEC).